A 409-amino-acid chain; its full sequence is Polyadenylate-binding protein RBP45 (409 aa).

The tract at residues 1–83 (MMPQSGVAQP…PSPTGNPNEV (83 aa)) is disordered. The span at 19–81 (QHQYQQQAPP…PNPSPTGNPN (63 aa)) shows a compositional bias: low complexity. RRM domains follow at residues 84 to 164 (RSLW…WASL) and 176 to 255 (HTIF…PAAN). Residues 251 to 280 (GPAANKKPVGTPQKATYQNPQATQGESDPN) form a disordered region. The segment covering 263–280 (QKATYQNPQATQGESDPN) has biased composition (polar residues). An RRM 3 domain is found at 282–354 (TTIFVGGLDP…QSIRLSWGRS (73 aa)).

It belongs to the polyadenylate-binding RBP45 family. As to quaternary structure, interacts with the poly(A) tail of mRNA in nucleus. Constitutively expressed in leaves, roots, and stems.

The protein resides in the nucleus. Its function is as follows. Heterogeneous nuclear ribonucleoprotein (hnRNP)-protein binding the poly(A) tail of mRNA and probably involved in some steps of pre-mRNA maturation. This chain is Polyadenylate-binding protein RBP45 (RBP45), found in Nicotiana plumbaginifolia (Leadwort-leaved tobacco).